The chain runs to 1108 residues: Folliculin-interacting protein 2 (1108 aa).

In terms of domain architecture, uDENN FNIP1/2-type spans 38 to 456 (FGLSDIRLLV…TVMPVDHPPI (419 aa)). 4 disordered regions span residues 89–112 (QESSSSSGSSSSGSSSSHGFGGSL), 209–233 (RTGSNLAHSTPVDMPSRGQNEDRDS), 598–635 (SEGVNTSELGHKPEKNRCKRPEQNSEASSMGFQEAEPD), and 649–671 (QNDQEATQDCSSSPPSCEVPRVR). Positions 91-106 (SSSSSGSSSSGSSSSH) are enriched in low complexity. 2 positions are modified to phosphoserine: serine 212 and serine 217. The 571-residue stretch at 464-1034 (TSQSVNMLAK…VSSLLQSILQ (571 aa)) folds into the cDENN FNIP1/2-type domain. An interaction with PRKAA1 region spans residues 540–905 (DDQVINGSKI…DEACVLALLE (366 aa)). Basic and acidic residues predominate over residues 606–620 (LGHKPEKNRCKRPEQ). The segment covering 652 to 663 (QEATQDCSSSPP) has biased composition (polar residues). Phosphoserine occurs at positions 720, 721, and 723. Residues 1044–1099 (FCIMHLEDRLQEMYLKSKMLSEYLRGHTRVHVKELSVVLGIESNDLPLLTAIASTH) enclose the dDENN FNIP1/2-type domain.

This sequence belongs to the FNIP family. As to quaternary structure, homodimer and homomultimer. Heterodimer and heteromultimer with FNIP1. Interacts (via C-terminus) with FLCN (via C-terminus). Phosphorylated FLCN is preferentially bound. Component of the lysosomal folliculin complex (LFC), composed of FLCN, FNIP1 (or FNIP2), RagA/RRAGA or RagB/RRAGB GDP-bound, RagC/RRAGC or RagD/RRAGD GTP-bound, and Ragulator. Interacts with PRKAA1, PRKAB1 and PRKAG1 subunits of 5'-AMP-activated protein kinase. Interacts with HSP70, HSP90AA1, STIP1, PTGES3, CDC37, BRAF, GCR and CDK4. In terms of processing, phosphorylated by AMPK.

The protein localises to the lysosome membrane. It localises to the cytoplasm. Its function is as follows. Binding partner of the GTPase-activating protein FLCN: involved in the cellular response to amino acid availability by regulating the non-canonical mTORC1 signaling cascade controlling the MiT/TFE factors TFEB and TFE3. Required to promote FLCN recruitment to lysosomes and interaction with Rag GTPases, leading to activation of the non-canonical mTORC1 signaling. In low-amino acid conditions, component of the lysosomal folliculin complex (LFC) on the membrane of lysosomes, which inhibits the GTPase-activating activity of FLCN, thereby inactivating mTORC1 and promoting nuclear translocation of TFEB and TFE3. Upon amino acid restimulation, disassembly of the LFC complex liberates the GTPase-activating activity of FLCN, leading to activation of mTORC1 and subsequent inactivation of TFEB and TFE3. Together with FLCN, regulates autophagy: following phosphorylation by ULK1, interacts with GABARAP and promotes autophagy. In addition to its role in mTORC1 signaling, also acts as a co-chaperone of HSP90AA1/Hsp90: inhibits the ATPase activity of HSP90AA1/Hsp90, leading to activate both kinase and non-kinase client proteins of HSP90AA1/Hsp90. Acts as a scaffold to load client protein FLCN onto HSP90AA1/Hsp90. Competes with the activating co-chaperone AHSA1 for binding to HSP90AA1, thereby providing a reciprocal regulatory mechanism for chaperoning of client proteins. May play a role in the signal transduction pathway of apoptosis induced by O6-methylguanine-mispaired lesions. The polypeptide is Folliculin-interacting protein 2 (Mus musculus (Mouse)).